Consider the following 331-residue polypeptide: MNVIMAGIDYTLAPIDIREKFSFTKSTLQAVYNDLLKNENIFGAVIVSTCNRTELYLSCEEGLYINPFELLCDAANFDYEEYSNMHVLRTGVDVIRHLCELACGVKSQIWGEDQIITQVRNAIELAREMNASDSTLEVMFRIAVTSAKKVKTTLKLSSTERSIAYSALKIIKSKENISKALVIGNGEIGRLMASILIENGYDTTITLRRYRHGDNIIPLGAKTIEYVARYEKLKDCDVVISATLSPHYTLEIDKIDRIKYPRLFIDLAVPRDIDPKIKSLDNVELYDLDSIYAGEVDKNRTEQMIQVKKIIDKYIFDYYRWYEYRKRLVLT.

Substrate contacts are provided by residues 49–52 (TCNR), Ser-107, 112–114 (EDQ), and Gln-118. Cys-50 acts as the Nucleophile in catalysis. An NADP(+)-binding site is contributed by 184 to 189 (GNGEIG).

It belongs to the glutamyl-tRNA reductase family. Homodimer.

It carries out the reaction (S)-4-amino-5-oxopentanoate + tRNA(Glu) + NADP(+) = L-glutamyl-tRNA(Glu) + NADPH + H(+). It participates in porphyrin-containing compound metabolism; protoporphyrin-IX biosynthesis; 5-aminolevulinate from L-glutamyl-tRNA(Glu): step 1/2. In terms of biological role, catalyzes the NADPH-dependent reduction of glutamyl-tRNA(Glu) to glutamate 1-semialdehyde (GSA). This Acetivibrio thermocellus (strain ATCC 27405 / DSM 1237 / JCM 9322 / NBRC 103400 / NCIMB 10682 / NRRL B-4536 / VPI 7372) (Clostridium thermocellum) protein is Glutamyl-tRNA reductase.